Here is a 130-residue protein sequence, read N- to C-terminus: Methylglyoxal synthase (130 aa).

The region spanning 1–130 (MSTPRIALIA…DLARRLTANA (130 aa)) is the MGS-like domain. Substrate contacts are provided by residues His11, Lys15, 37–40 (TGTT), and 57–58 (SG). Asp63 (proton donor/acceptor) is an active-site residue. A substrate-binding site is contributed by His90.

This sequence belongs to the methylglyoxal synthase family.

It carries out the reaction dihydroxyacetone phosphate = methylglyoxal + phosphate. Its function is as follows. Catalyzes the formation of methylglyoxal from dihydroxyacetone phosphate. This chain is Methylglyoxal synthase, found in Burkholderia mallei (strain NCTC 10247).